Reading from the N-terminus, the 361-residue chain is Probable G-protein coupled receptor 25 (361 aa).

Residues 1–39 are Extracellular-facing; that stretch reads MAPTEPWSPSPGSAPWDYSGLDGLEELELCPAGDLPYGY. The chain crosses the membrane as a helical span at residues 40 to 60; sequence VYIPALYLAAFAVGLLGNAFV. Over 61–75 the chain is Cytoplasmic; sequence VWLLAGRRGPRRLVD. Residues 76–96 traverse the membrane as a helical segment; that stretch reads TFVLHLAAADLGFVLTLPLWA. Residues 97 to 126 are Extracellular-facing; it reads AAAALGGRWPFGDGLCKLSSFALAGTRCAG. The chain crosses the membrane as a helical span at residues 127 to 147; it reads ALLLAGMSVDRYLAVVKLLEA. At 148–155 the chain is on the cytoplasmic side; the sequence is RPLRTPRC. A helical transmembrane segment spans residues 156 to 176; the sequence is ALASCCGVWAVALLAGLPSLV. Topologically, residues 177 to 200 are extracellular; the sequence is YRGLQPLPGGQDSQCGEEPSHAFQ. Residues 201–220 form a helical membrane-spanning segment; it reads GLSLLLLLLTFVLPLVVTLF. Over 221 to 242 the chain is Cytoplasmic; that stretch reads CYCRISRRLRRPPHVGRARRNS. Residues 243 to 263 form a helical membrane-spanning segment; it reads LRIIFAIESTFVGSWLPFSAL. The Extracellular segment spans residues 264–289; that stretch reads RAVFHLARLGALPLPCPLLLALRWGL. The helical transmembrane segment at 290–310 threads the bilayer; that stretch reads TIATCLAFVNSCANPLIYLLL. The Cytoplasmic segment spans residues 311-361; sequence DRSFRARALDGACGRTGRLARRISSASSLSRDDSSVFRCRAQAANTASASW.

Belongs to the G-protein coupled receptor 1 family.

The protein localises to the cell membrane. In terms of biological role, orphan receptor. This is Probable G-protein coupled receptor 25 (GPR25) from Homo sapiens (Human).